The sequence spans 428 residues: 3-phosphoshikimate 1-carboxyvinyltransferase (428 aa).

Residues lysine 22, serine 23, and arginine 27 each contribute to the 3-phosphoshikimate site. Phosphoenolpyruvate is bound at residue lysine 22. Phosphoenolpyruvate-binding residues include glycine 96 and arginine 124. 3-phosphoshikimate is bound by residues serine 171, serine 172, glutamine 173, serine 198, aspartate 311, and lysine 338. Residue glutamine 173 coordinates phosphoenolpyruvate. Catalysis depends on aspartate 311, which acts as the Proton acceptor. Residues arginine 342 and arginine 383 each coordinate phosphoenolpyruvate.

It belongs to the EPSP synthase family. In terms of assembly, monomer.

It localises to the cytoplasm. The enzyme catalyses 3-phosphoshikimate + phosphoenolpyruvate = 5-O-(1-carboxyvinyl)-3-phosphoshikimate + phosphate. Its pathway is metabolic intermediate biosynthesis; chorismate biosynthesis. Functionally, catalyzes the transfer of the enolpyruvyl moiety of phosphoenolpyruvate (PEP) to the 5-hydroxyl of shikimate-3-phosphate (S3P) to produce enolpyruvyl shikimate-3-phosphate and inorganic phosphate. In Methanopyrus kandleri (strain AV19 / DSM 6324 / JCM 9639 / NBRC 100938), this protein is 3-phosphoshikimate 1-carboxyvinyltransferase.